Reading from the N-terminus, the 555-residue chain is Acetyl-coenzyme A thioesterase (555 aa).

One can recognise a HotDog ACOT-type 1 domain in the interval 5 to 117 (APGEVVMSQA…FSTFVAKPVG (113 aa)). K33 is subject to N6-succinyllysine. CoA is bound by residues 53-55 (TAS), 82-84 (STS), and R144. N6-succinyllysine occurs at positions 159 and 228. Residues 179-294 (RGTSVQSIEL…FLIYNAADDK (116 aa)) enclose the HotDog ACOT-type 2 domain. Residue 234 to 236 (KFR) participates in CoA binding. The 210-residue stretch at 340 to 549 (CIHWDISKQA…IQFLENPPDD (210 aa)) folds into the START domain.

Homodimer or homotetramer.

The protein localises to the cytoplasm. It localises to the cytosol. It carries out the reaction acetyl-CoA + H2O = acetate + CoA + H(+). The enzyme catalyses butanoyl-CoA + H2O = butanoate + CoA + H(+). The catalysed reaction is hexanoyl-CoA + H2O = hexanoate + CoA + H(+). It functions in the pathway lipid metabolism; fatty acid metabolism. Inhibited by ADP. Active in the presence of ATP. Cold labile, it dissociates into inactive monomers at low temperature. Catalyzes the hydrolysis of acyl-CoAs into free fatty acids and coenzyme A (CoASH), regulating their respective intracellular levels. Preferentially hydrolyzes acetyl-CoA. The chain is Acetyl-coenzyme A thioesterase (ACOT12) from Homo sapiens (Human).